Reading from the N-terminus, the 124-residue chain is Large ribosomal subunit protein bL12 (124 aa).

The protein belongs to the bacterial ribosomal protein bL12 family. As to quaternary structure, homodimer. Part of the ribosomal stalk of the 50S ribosomal subunit. Forms a multimeric L10(L12)X complex, where L10 forms an elongated spine to which 2 to 4 L12 dimers bind in a sequential fashion. Binds GTP-bound translation factors.

In terms of biological role, forms part of the ribosomal stalk which helps the ribosome interact with GTP-bound translation factors. Is thus essential for accurate translation. This Borreliella burgdorferi (strain ZS7) (Borrelia burgdorferi) protein is Large ribosomal subunit protein bL12.